Here is a 220-residue protein sequence, read N- to C-terminus: N-(5'-phosphoribosyl)anthranilate isomerase (220 aa).

It belongs to the TrpF family.

The catalysed reaction is N-(5-phospho-beta-D-ribosyl)anthranilate = 1-(2-carboxyphenylamino)-1-deoxy-D-ribulose 5-phosphate. It functions in the pathway amino-acid biosynthesis; L-tryptophan biosynthesis; L-tryptophan from chorismate: step 3/5. The sequence is that of N-(5'-phosphoribosyl)anthranilate isomerase from Xylella fastidiosa (strain M12).